We begin with the raw amino-acid sequence, 161 residues long: Lipoprotein signal peptidase (161 aa).

3 consecutive transmembrane segments (helical) span residues Ile-6–Val-26, Gly-67–Lys-87, and Val-90–Leu-110. Residues Asp-121 and Asp-139 contribute to the active site. The helical transmembrane segment at Ala-134–Ile-154 threads the bilayer.

This sequence belongs to the peptidase A8 family.

It localises to the cell inner membrane. It carries out the reaction Release of signal peptides from bacterial membrane prolipoproteins. Hydrolyzes -Xaa-Yaa-Zaa-|-(S,diacylglyceryl)Cys-, in which Xaa is hydrophobic (preferably Leu), and Yaa (Ala or Ser) and Zaa (Gly or Ala) have small, neutral side chains.. It functions in the pathway protein modification; lipoprotein biosynthesis (signal peptide cleavage). In terms of biological role, this protein specifically catalyzes the removal of signal peptides from prolipoproteins. The sequence is that of Lipoprotein signal peptidase from Syntrophus aciditrophicus (strain SB).